Reading from the N-terminus, the 864-residue chain is MYMARCGPKNNVLCFPFQLSFLFSKRLINKRFKYTLQTEDEKNMMGSLSKNKIITPEDVEFKLAQLREFSNTLKERIHNTKSVNSDGHQSNSIAPISEDSRNVNVTKISSVPNEEKSKNLSDLIHSSFLEKMDHLVPKVIRERVADDDILAKNLFDRSHSNWAPVIDRLYVSEKRFMDIDSREFSVWLNGTVKYLPFHSILHLDEMLLEQINGDVVKFNTHMYECIFNNLGNLKPTNFNQDGTNDKVILKMKELLERYDKALKITEERINKKEGFPSKVPKMTQAILNNCLKYSTKCSSFHDMDYFITKFRDDYGITPNKQNLTTVIQFYSRKEMTKQAWNTFDTMKFLSTKHFPDICTYNTMLRICEKERNFPKALDLFQEIQDHNIKPTTNTYIMMARVLASSSSNAVVSEGKSDSLRLLGWKYLHELEDKNLYRHKKDDLNLFLAMMALAAFDGDIELSRALYYLFIAKKYKTLCANWKGNILVDQDTIWKSTLMPEMLNYLMLAYARFDPRNLPVLSGYEKGIELRRKFLREFDSSMRLDDTDKLVKFKLPFLPISDLNSEAQVLAESNAIWSFNLENGGTRNTLTSSNEAALEDIKKYRQLLDSFAQEAEDFNEFKFKVMYEVTKMQRESINVNVFNKISLHTYLSIPINLKQQKEFLRRLTFFTFQQHEFEAVIKRLYEGYRNIPSSHTRDQNSISTEAISVSKPETTEDLNLIMHDIWYITCLRHKIMMDTTLYELVMKAAIEFQNEDLAKKVWNDRGKFRTTVPFLKMDQRIRIAKDQKFAHLMVEFFTKQGKYSDAIAIILSSKNRFNWTYSMVRNLHKALEEIEDRNSVEILLDVVNKKSHAKALKWEEQELNM.

A mitochondrion-targeting transit peptide spans 1 to 76; sequence MYMARCGPKN…REFSNTLKER (76 aa). 2 PPR repeats span residues 319 to 353 and 356 to 390; these read NKQN…STKH and DICT…NIKP.

The protein belongs to the CCM1 family. As to quaternary structure, binds to mitochondrial small subunit 15S rRNA.

The protein localises to the mitochondrion. Functionally, regulates mitochondrial small subunit maturation by controlling 15S rRNA 5'-end processing. Localizes to the 5' precursor of the 15S rRNA in a position that is subsequently occupied by mS47 in the mature yeast mtSSU. Uses structure and sequence-specific RNA recognition, binding to a single-stranded region of the precursor and specifically recognizing bases -6 to -1. The exchange of Ccm1 for mS47 is coupled to the irreversible removal of precursor rRNA that is accompanied by conformational changes of the mitoribosomal proteins uS5m and mS26. These conformational changes signal completion of 5'-end rRNA processing through protection of the mature 5'-end of the 15S rRNA and stabilization of mS47. The removal of the 5' precursor together with the dissociation of Ccm1 may be catalyzed by the 5'-3' exoribonuclease Pet127. Involved in the specific removal of group I introns in mitochondrial encoded transcripts. The chain is Mitochondrial 15S rRNA processing factor CCM1 (CCM1) from Saccharomyces cerevisiae (strain RM11-1a) (Baker's yeast).